A 142-amino-acid chain; its full sequence is HTH-type transcriptional regulator MntR (142 aa).

An HTH dtxR-type domain is found at M1 to T63. Mn(2+) is bound by residues D8, E11, H77, E99, E102, and H103.

This sequence belongs to the DtxR/MntR family. In terms of assembly, homodimer.

Its subcellular location is the cytoplasm. DNA binding is strongly activated by Mn(2+). Its function is as follows. Central regulator of manganese homeostasis. This chain is HTH-type transcriptional regulator MntR, found in Listeria monocytogenes serotype 4b (strain CLIP80459).